The following is a 122-amino-acid chain: Large ribosomal subunit protein uL14 (122 aa).

The protein belongs to the universal ribosomal protein uL14 family. As to quaternary structure, part of the 50S ribosomal subunit. Forms a cluster with proteins L3 and L19. In the 70S ribosome, L14 and L19 interact and together make contacts with the 16S rRNA in bridges B5 and B8.

Binds to 23S rRNA. Forms part of two intersubunit bridges in the 70S ribosome. This is Large ribosomal subunit protein uL14 from Brucella abortus (strain 2308).